Here is a 113-residue protein sequence, read N- to C-terminus: Large ribosomal subunit protein bL17 (113 aa).

The protein belongs to the bacterial ribosomal protein bL17 family. As to quaternary structure, part of the 50S ribosomal subunit. Contacts protein L32.

The sequence is that of Large ribosomal subunit protein bL17 from Clostridium kluyveri (strain NBRC 12016).